Consider the following 1463-residue polypeptide: Gag-Pol polyprotein (1463 aa).

A lipid anchor (N-myristoyl glycine; by host) is attached at Gly-2. Positions 7-31 are interaction with Gp41; that stretch reads VLRGKKADELEKIRLRPGGKKKYRL. The Nuclear export signal motif lies at 16-22; it reads LEKIRLR. Residues 26 to 32 carry the Nuclear localization signal motif; sequence KKKYRLK. Residues 112–138 are disordered; that stretch reads TKTTEKMPSTSRPTAPPSGNGGNFPVQ. The tract at residues 191–228 is interaction with human PPIA/CYPA and NUP153; it reads NCVGDHQAAMQIIREIINEEAADWDAQHPIPGPLPAGQ. A dimerization/Multimerization of capsid protein p24 region spans residues 279 to 365; the sequence is YNPTNILDIK…GGPGQKARLM (87 aa). 2 CCHC-type zinc fingers span residues 389–406 and 410–427; these read IKCW…QCRA and QGCW…KCPE. Residues 441–508 form a disordered region; the sequence is EAPQFPCGPN…TRDTMQRDDR (68 aa). Residues 462–508 are compositionally biased toward basic and acidic residues; sequence RPSRGPTREVHAAREKAERAEREAIQRSDRGLPAARETRDTMQRDDR. A dimerization of protease region spans residues 513–517; sequence PQFSL. The 70-residue stretch at 532–601 folds into the Peptidase A2 domain; that stretch reads VEVLLDTGAD…TPINIFGRNI (70 aa). Residue Asp-537 is the For protease activity; shared with dimeric partner of the active site. 2 dimerization of protease regions span residues 561 to 567 and 600 to 612; these read GIGGFIN and NILT…LNLP. The Reverse transcriptase domain maps to 655 to 845; that stretch reads EGQLEEAPPT…PPYQWMGYEL (191 aa). Asp-721, Asp-796, and Asp-797 together coordinate Mg(2+). The tract at residues 838 to 846 is RT 'primer grip'; the sequence is YQWMGYELW. Residues 1008–1024 carry the Tryptophan repeat motif motif; sequence WEQWWDNYWQVTWIPDW. Positions 1044-1167 constitute an RNase H type-1 domain; sequence ILGAETFYTD…VDHLVSQGIR (124 aa). The Mg(2+) site is built by Asp-1053, Glu-1088, Asp-1108, and Asp-1159. The Integrase-type zinc finger occupies 1173–1214; sequence EKIEPAQEEHEKYHSNVKELSHKFGLPKLVARQIVNTCTQCQ. Zn(2+)-binding residues include His-1182, His-1186, Cys-1210, and Cys-1213. The region spanning 1223–1374 is the Integrase catalytic domain; that stretch reads QVNAELGTWQ…TPAERLINMV (152 aa). Positions 1234, 1286, and 1322 each coordinate Mg(2+). A DNA-binding region (integrase-type) is located at residues 1393–1440; that stretch reads FRVYFREGRDQLWKGPGELLWKGDGAVIVKVGADIKIIPRRKAKIIKD.

In terms of assembly, homotrimer; further assembles as hexamers of trimers. Interacts with gp41 (via C-terminus). Interacts with host CALM1; this interaction induces a conformational change in the Matrix protein, triggering exposure of the myristate group. Interacts with host AP3D1; this interaction allows the polyprotein trafficking to multivesicular bodies during virus assembly. Part of the pre-integration complex (PIC) which is composed of viral genome, matrix protein, Vpr and integrase. As to quaternary structure, homodimer; the homodimer further multimerizes as homohexamers or homopentamers. Interacts with human PPIA/CYPA. Interacts with human NUP153. Interacts with host PDZD8; this interaction stabilizes the capsid. Interacts with monkey TRIM5; this interaction destabilizes the capsid. Homodimer, whose active site consists of two apposed aspartic acid residues. In terms of assembly, heterodimer of p66 RT and p51 RT (RT p66/p51). Heterodimerization of RT is essential for DNA polymerase activity. The overall folding of the subdomains is similar in p66 RT and p51 RT but the spatial arrangements of the subdomains are dramatically different. As to quaternary structure, homotetramer; may further associate as a homohexadecamer. Part of the pre-integration complex (PIC) which is composed of viral genome, matrix protein, Vpr and integrase. Interacts with human SMARCB1/INI1 and human PSIP1/LEDGF isoform 1. Interacts with human KPNA3; this interaction might play a role in nuclear import of the pre-integration complex. Interacts with human NUP153; this interaction might play a role in nuclear import of the pre-integration complex. The cofactor is Mg(2+). Specific enzymatic cleavages by the viral protease yield mature proteins. The protease is released by autocatalytic cleavage. The polyprotein is cleaved during and after budding, this process is termed maturation. Proteolytic cleavage of p66 RT removes the RNase H domain to yield the p51 RT subunit. Nucleocapsid protein p7 might be further cleaved after virus entry.

The protein resides in the host cell membrane. It localises to the host endosome. Its subcellular location is the host multivesicular body. It is found in the virion membrane. The protein localises to the host nucleus. The protein resides in the host cytoplasm. It localises to the virion. It catalyses the reaction Endopeptidase for which the P1 residue is preferably hydrophobic.. The enzyme catalyses Endohydrolysis of RNA in RNA/DNA hybrids. Three different cleavage modes: 1. sequence-specific internal cleavage of RNA. Human immunodeficiency virus type 1 and Moloney murine leukemia virus enzymes prefer to cleave the RNA strand one nucleotide away from the RNA-DNA junction. 2. RNA 5'-end directed cleavage 13-19 nucleotides from the RNA end. 3. DNA 3'-end directed cleavage 15-20 nucleotides away from the primer terminus.. It carries out the reaction 3'-end directed exonucleolytic cleavage of viral RNA-DNA hybrid.. The catalysed reaction is DNA(n) + a 2'-deoxyribonucleoside 5'-triphosphate = DNA(n+1) + diphosphate. Protease: The viral protease is inhibited by many synthetic protease inhibitors (PIs), such as amprenavir, atazanavir, indinavir, loprinavir, nelfinavir, ritonavir and saquinavir. Use of protease inhibitors in tritherapy regimens permit more ambitious therapeutic strategies. Reverse transcriptase/ribonuclease H: RT can be inhibited either by nucleoside RT inhibitors (NRTIs) or by non nucleoside RT inhibitors (NNRTIs). NRTIs act as chain terminators, whereas NNRTIs inhibit DNA polymerization by binding a small hydrophobic pocket near the RT active site and inducing an allosteric change in this region. Classical NRTIs are abacavir, adefovir (PMEA), didanosine (ddI), lamivudine (3TC), stavudine (d4T), tenofovir (PMPA), zalcitabine (ddC), and zidovudine (AZT). Classical NNRTIs are atevirdine (BHAP U-87201E), delavirdine, efavirenz (DMP-266), emivirine (I-EBU), and nevirapine (BI-RG-587). The tritherapies used as a basic effective treatment of AIDS associate two NRTIs and one NNRTI. Mediates, with Gag polyprotein, the essential events in virion assembly, including binding the plasma membrane, making the protein-protein interactions necessary to create spherical particles, recruiting the viral Env proteins, and packaging the genomic RNA via direct interactions with the RNA packaging sequence (Psi). Gag-Pol polyprotein may regulate its own translation, by the binding genomic RNA in the 5'-UTR. At low concentration, the polyprotein would promote translation, whereas at high concentration, the polyprotein would encapsidate genomic RNA and then shut off translation. Its function is as follows. Targets the polyprotein to the plasma membrane via a multipartite membrane-binding signal, that includes its myristoylated N-terminus. Matrix protein is part of the pre-integration complex. Implicated in the release from host cell mediated by Vpu. Binds to RNA. In terms of biological role, forms the conical core that encapsulates the genomic RNA-nucleocapsid complex in the virion. Most core are conical, with only 7% tubular. The core is constituted by capsid protein hexamer subunits. The core is disassembled soon after virion entry. Host restriction factors such as TRIM5-alpha or TRIMCyp bind retroviral capsids and cause premature capsid disassembly, leading to blocks in reverse transcription. Capsid restriction by TRIM5 is one of the factors which restricts HIV-1 to the human species. Host PIN1 apparently facilitates the virion uncoating. On the other hand, interactions with PDZD8 or CYPA stabilize the capsid. Functionally, encapsulates and protects viral dimeric unspliced genomic RNA (gRNA). Binds these RNAs through its zinc fingers. Acts as a nucleic acid chaperone which is involved in rearangement of nucleic acid secondary structure during gRNA retrotranscription. Also facilitates template switch leading to recombination. As part of the polyprotein, participates in gRNA dimerization, packaging, tRNA incorporation and virion assembly. Aspartyl protease that mediates proteolytic cleavages of Gag and Gag-Pol polyproteins during or shortly after the release of the virion from the plasma membrane. Cleavages take place as an ordered, step-wise cascade to yield mature proteins. This process is called maturation. Displays maximal activity during the budding process just prior to particle release from the cell. Also cleaves Nef and Vif, probably concomitantly with viral structural proteins on maturation of virus particles. Hydrolyzes host EIF4GI and PABP1 in order to shut off the capped cellular mRNA translation. The resulting inhibition of cellular protein synthesis serves to ensure maximal viral gene expression and to evade host immune response. Its function is as follows. Multifunctional enzyme that converts the viral RNA genome into dsDNA in the cytoplasm, shortly after virus entry into the cell. This enzyme displays a DNA polymerase activity that can copy either DNA or RNA templates, and a ribonuclease H (RNase H) activity that cleaves the RNA strand of RNA-DNA heteroduplexes in a partially processive 3' to 5' endonucleasic mode. Conversion of viral genomic RNA into dsDNA requires many steps. A tRNA(3)-Lys binds to the primer-binding site (PBS) situated at the 5'-end of the viral RNA. RT uses the 3' end of the tRNA primer to perform a short round of RNA-dependent minus-strand DNA synthesis. The reading proceeds through the U5 region and ends after the repeated (R) region which is present at both ends of viral RNA. The portion of the RNA-DNA heteroduplex is digested by the RNase H, resulting in a ssDNA product attached to the tRNA primer. This ssDNA/tRNA hybridizes with the identical R region situated at the 3' end of viral RNA. This template exchange, known as minus-strand DNA strong stop transfer, can be either intra- or intermolecular. RT uses the 3' end of this newly synthesized short ssDNA to perform the RNA-dependent minus-strand DNA synthesis of the whole template. RNase H digests the RNA template except for two polypurine tracts (PPTs) situated at the 5'-end and near the center of the genome. It is not clear if both polymerase and RNase H activities are simultaneous. RNase H probably can proceed both in a polymerase-dependent (RNA cut into small fragments by the same RT performing DNA synthesis) and a polymerase-independent mode (cleavage of remaining RNA fragments by free RTs). Secondly, RT performs DNA-directed plus-strand DNA synthesis using the PPTs that have not been removed by RNase H as primers. PPTs and tRNA primers are then removed by RNase H. The 3' and 5' ssDNA PBS regions hybridize to form a circular dsDNA intermediate. Strand displacement synthesis by RT to the PBS and PPT ends produces a blunt ended, linear dsDNA copy of the viral genome that includes long terminal repeats (LTRs) at both ends. In terms of biological role, catalyzes viral DNA integration into the host chromosome, by performing a series of DNA cutting and joining reactions. This enzyme activity takes place after virion entry into a cell and reverse transcription of the RNA genome in dsDNA. The first step in the integration process is 3' processing. This step requires a complex comprising the viral genome, matrix protein, Vpr and integrase. This complex is called the pre-integration complex (PIC). The integrase protein removes 2 nucleotides from each 3' end of the viral DNA, leaving recessed CA OH's at the 3' ends. In the second step, the PIC enters cell nucleus. This process is mediated through integrase and Vpr proteins, and allows the virus to infect a non dividing cell. This ability to enter the nucleus is specific of lentiviruses, other retroviruses cannot and rely on cell division to access cell chromosomes. In the third step, termed strand transfer, the integrase protein joins the previously processed 3' ends to the 5' ends of strands of target cellular DNA at the site of integration. The 5'-ends are produced by integrase-catalyzed staggered cuts, 5 bp apart. A Y-shaped, gapped, recombination intermediate results, with the 5'-ends of the viral DNA strands and the 3' ends of target DNA strands remaining unjoined, flanking a gap of 5 bp. The last step is viral DNA integration into host chromosome. This involves host DNA repair synthesis in which the 5 bp gaps between the unjoined strands are filled in and then ligated. Since this process occurs at both cuts flanking the HIV genome, a 5 bp duplication of host DNA is produced at the ends of HIV-1 integration. Alternatively, Integrase may catalyze the excision of viral DNA just after strand transfer, this is termed disintegration. This is Gag-Pol polyprotein (gag-pol) from Human immunodeficiency virus type 2 subtype A (isolate ST) (HIV-2).